Reading from the N-terminus, the 38-residue chain is Large ribosomal subunit protein bL36c (38 aa).

It belongs to the bacterial ribosomal protein bL36 family.

It localises to the plastid. The protein resides in the chloroplast. The protein is Large ribosomal subunit protein bL36c (rpl36) of Mesostigma viride (Green alga).